A 271-amino-acid polypeptide reads, in one-letter code: Acyl-[acyl-carrier-protein]--UDP-N-acetylglucosamine O-acyltransferase (271 aa).

The protein belongs to the transferase hexapeptide repeat family. LpxA subfamily. In terms of assembly, homotrimer.

The protein localises to the cytoplasm. It catalyses the reaction a (3R)-hydroxyacyl-[ACP] + UDP-N-acetyl-alpha-D-glucosamine = a UDP-3-O-[(3R)-3-hydroxyacyl]-N-acetyl-alpha-D-glucosamine + holo-[ACP]. It functions in the pathway glycolipid biosynthesis; lipid IV(A) biosynthesis; lipid IV(A) from (3R)-3-hydroxytetradecanoyl-[acyl-carrier-protein] and UDP-N-acetyl-alpha-D-glucosamine: step 1/6. Functionally, involved in the biosynthesis of lipid A, a phosphorylated glycolipid that anchors the lipopolysaccharide to the outer membrane of the cell. This chain is Acyl-[acyl-carrier-protein]--UDP-N-acetylglucosamine O-acyltransferase, found in Azorhizobium caulinodans (strain ATCC 43989 / DSM 5975 / JCM 20966 / LMG 6465 / NBRC 14845 / NCIMB 13405 / ORS 571).